A 703-amino-acid polypeptide reads, in one-letter code: DNA ligase (703 aa).

NAD(+)-binding positions include 54-58, 103-104, and glutamate 132; these read DAEYD and SL. Lysine 134 serves as the catalytic N6-AMP-lysine intermediate. 4 residues coordinate NAD(+): arginine 155, glutamate 192, lysine 308, and lysine 332. Residues cysteine 426, cysteine 429, cysteine 444, and cysteine 450 each contribute to the Zn(2+) site. The 91-residue stretch at 608–698 folds into the BRCT domain; that stretch reads EGPGPLDGVV…ADAARALAVP (91 aa).

Belongs to the NAD-dependent DNA ligase family. LigA subfamily. Mg(2+) is required as a cofactor. Mn(2+) serves as cofactor.

The enzyme catalyses NAD(+) + (deoxyribonucleotide)n-3'-hydroxyl + 5'-phospho-(deoxyribonucleotide)m = (deoxyribonucleotide)n+m + AMP + beta-nicotinamide D-nucleotide.. Its function is as follows. DNA ligase that catalyzes the formation of phosphodiester linkages between 5'-phosphoryl and 3'-hydroxyl groups in double-stranded DNA using NAD as a coenzyme and as the energy source for the reaction. It is essential for DNA replication and repair of damaged DNA. The polypeptide is DNA ligase (Parafrankia sp. (strain EAN1pec)).